We begin with the raw amino-acid sequence, 294 residues long: Elongation factor Ts (294 aa).

The interval 82-85 (TDFV) is involved in Mg(2+) ion dislocation from EF-Tu.

The protein belongs to the EF-Ts family.

The protein resides in the cytoplasm. Associates with the EF-Tu.GDP complex and induces the exchange of GDP to GTP. It remains bound to the aminoacyl-tRNA.EF-Tu.GTP complex up to the GTP hydrolysis stage on the ribosome. This is Elongation factor Ts from Psychrobacter arcticus (strain DSM 17307 / VKM B-2377 / 273-4).